A 204-amino-acid chain; its full sequence is Small ribosomal subunit protein uS3 (204 aa).

Positions 37–105 constitute a KH type-2 domain; sequence IRSYINESFK…NVEVNVVGVK (69 aa).

It belongs to the universal ribosomal protein uS3 family. In terms of assembly, part of the 30S ribosomal subunit. Forms a tight complex with proteins S10 and S14.

In terms of biological role, binds the lower part of the 30S subunit head. Binds mRNA in the 70S ribosome, positioning it for translation. The protein is Small ribosomal subunit protein uS3 of Wolbachia pipientis wMel.